Consider the following 72-residue polypeptide: Prokaryotic ubiquitin-like protein Pup (72 aa).

Over residues 1–10 (MATRDSGGGQ) the composition is skewed to gly residues. Residues 1-41 (MATRDSGGGQQHTNRHADEVEEVAAEGNDASDLKERHEKLS) are disordered. A coiled-coil region spans residues 21–61 (EEVAAEGNDASDLKERHEKLSEDVDSLLDEIDDVLEENAEE). The interval 28-66 (NDASDLKERHEKLSEDVDSLLDEIDDVLEENAEEFVKGY) is ARC ATPase binding. A compositionally biased stretch (basic and acidic residues) spans 31–41 (SDLKERHEKLS). E72 participates in a covalent cross-link: Isoglutamyl lysine isopeptide (Glu-Lys) (interchain with K-? in acceptor proteins).

This sequence belongs to the prokaryotic ubiquitin-like protein family. In terms of assembly, strongly interacts with the proteasome-associated ATPase ARC through a hydrophobic interface; the interacting region of Pup lies in its C-terminal half. There is one Pup binding site per ARC hexamer ring.

Its pathway is protein degradation; proteasomal Pup-dependent pathway. Functionally, protein modifier that is covalently attached to lysine residues of substrate proteins, thereby targeting them for proteasomal degradation. The tagging system is termed pupylation. In Frankia alni (strain DSM 45986 / CECT 9034 / ACN14a), this protein is Prokaryotic ubiquitin-like protein Pup.